Consider the following 240-residue polypeptide: Pathogenesis-related thaumatin-like protein 3.5 (240 aa).

A signal peptide spans 1–20; the sequence is MASLRLATLAMMVLFGSCRA. Cystine bridges form between Cys31/Cys237, Cys79/Cys89, Cys94/Cys100, Cys145/Cys227, Cys150/Cys210, Cys158/Cys173, Cys177/Cys186, and Cys187/Cys197.

It belongs to the thaumatin family. As to expression, strongly expressed in pollen grains. Also present at weak levels in seedling roots, in sapling stems and in developing male strobili.

In terms of biological role, may be involved in disease resistance. The chain is Pathogenesis-related thaumatin-like protein 3.5 from Cryptomeria japonica (Japanese cedar).